Consider the following 364-residue polypeptide: UDP-N-acetylglucosamine--N-acetylmuramyl-(pentapeptide) pyrophosphoryl-undecaprenol N-acetylglucosamine transferase (364 aa).

Residues 10–12 (TGG), Asn-124, Arg-165, Ser-193, Ile-248, and Gln-293 each bind UDP-N-acetyl-alpha-D-glucosamine.

The protein belongs to the glycosyltransferase 28 family. MurG subfamily.

It localises to the cell inner membrane. The enzyme catalyses di-trans,octa-cis-undecaprenyl diphospho-N-acetyl-alpha-D-muramoyl-L-alanyl-D-glutamyl-meso-2,6-diaminopimeloyl-D-alanyl-D-alanine + UDP-N-acetyl-alpha-D-glucosamine = di-trans,octa-cis-undecaprenyl diphospho-[N-acetyl-alpha-D-glucosaminyl-(1-&gt;4)]-N-acetyl-alpha-D-muramoyl-L-alanyl-D-glutamyl-meso-2,6-diaminopimeloyl-D-alanyl-D-alanine + UDP + H(+). It functions in the pathway cell wall biogenesis; peptidoglycan biosynthesis. Its function is as follows. Cell wall formation. Catalyzes the transfer of a GlcNAc subunit on undecaprenyl-pyrophosphoryl-MurNAc-pentapeptide (lipid intermediate I) to form undecaprenyl-pyrophosphoryl-MurNAc-(pentapeptide)GlcNAc (lipid intermediate II). The sequence is that of UDP-N-acetylglucosamine--N-acetylmuramyl-(pentapeptide) pyrophosphoryl-undecaprenol N-acetylglucosamine transferase from Geobacter sulfurreducens (strain ATCC 51573 / DSM 12127 / PCA).